The following is a 1122-amino-acid chain: Angiopoietin-1 receptor (1122 aa).

The first 22 residues, Met-1–Gly-22, serve as a signal peptide directing secretion. The Extracellular segment spans residues Ala-23–Leu-746. A disulfide bridge connects residues Cys-44 and Cys-102. The Ig-like C2-type 1 domain occupies Cys-44 to Ser-123. Residues Asn-140 and Asn-158 are each glycosylated (N-linked (GlcNAc...) asparagine). 3 EGF-like domains span residues Arg-210–Glu-252, Ala-254–Asn-299, and Ala-301–Glu-341. 13 disulfides stabilise this stretch: Cys-211–Cys-220, Cys-224–Cys-233, Cys-227–Cys-240, Cys-242–Cys-251, Cys-255–Cys-264, Cys-268–Cys-274, Cys-280–Cys-287, Cys-289–Cys-298, Cys-302–Cys-311, Cys-315–Cys-323, Cys-317–Cys-329, Cys-331–Cys-340, and Cys-370–Cys-424. Residues Pro-350–Ser-440 enclose the Ig-like C2-type 2 domain. 7 N-linked (GlcNAc...) asparagine glycosylation sites follow: Asn-399, Asn-438, Asn-464, Asn-558, Asn-595, Asn-648, and Asn-690. 3 Fibronectin type-III domains span residues Leu-444–Ile-539, Pro-543–Asp-635, and Gln-640–His-733. Residues Leu-747–Ile-767 form a helical membrane-spanning segment. The Cytoplasmic segment spans residues Met-768 to Ala-1122. Residues Ile-822–Leu-1094 form the Protein kinase domain. ATP-binding positions include Ile-828–Val-836 and Lys-853. At Tyr-858 the chain carries Phosphotyrosine; by autocatalysis. Asp-962 serves as the catalytic Proton acceptor. Phosphotyrosine; by autocatalysis occurs at positions 990, 1100, and 1106.

The protein belongs to the protein kinase superfamily. Tyr protein kinase family. Tie subfamily. As to quaternary structure, homodimer. Heterodimer with TIE1. Interacts with ANGPT1, ANGPT2 and ANGPT4. At cell-cell contacts in quiescent cells, forms a signaling complex composed of ANGPT1 plus TEK molecules from two adjoining cells. In the absence of endothelial cell-cell contacts, interaction with ANGPT1 mediates contacts with the extracellular matrix. Interacts (tyrosine phosphorylated) with TNIP2. Interacts (tyrosine phosphorylated) with SHC1 (via SH2 domain). Interacts with PTPRB; this promotes endothelial cell-cell adhesion. Interacts with DOK2, GRB2, GRB7, GRB14, PIK3R1 and PTPN11/SHP2. Colocalizes with DOK2 at contacts with the extracellular matrix in migrating cells. Proteolytic processing leads to the shedding of the extracellular domain (soluble TIE-2 alias sTIE-2). Post-translationally, autophosphorylated on tyrosine residues in response to ligand binding. Autophosphorylation occurs in trans, i.e. one subunit of the dimeric receptor phosphorylates tyrosine residues on the other subunit. Autophosphorylation occurs in a sequential manner, where Tyr-990 in the kinase activation loop is phosphorylated first, followed by autophosphorylation at Tyr-1106 and at additional tyrosine residues. ANGPT1-induced phosphorylation is impaired during hypoxia, due to increased expression of ANGPT2. Phosphorylation is important for interaction with GRB14, PIK3R1 and PTPN11. Phosphorylation at Tyr-1100 is important for interaction with GRB2 and GRB7. Phosphorylation at Tyr-1106 is important for interaction with DOK2 and for coupling to downstream signal transduction pathways in endothelial cells. Dephosphorylated by PTPRB. In terms of processing, ubiquitinated. The phosphorylated receptor is ubiquitinated and internalized, leading to its degradation. In terms of tissue distribution, specifically expressed in developing vascular endothelial cells. Abundantly expressed in lung and heart, moderately in brain, liver and kidney, and weakly in thymus, spleen and testis.

The protein localises to the cell membrane. It localises to the cell junction. The protein resides in the focal adhesion. Its subcellular location is the cytoplasm. It is found in the cytoskeleton. The protein localises to the secreted. It catalyses the reaction L-tyrosyl-[protein] + ATP = O-phospho-L-tyrosyl-[protein] + ADP + H(+). With respect to regulation, angiopoietin binding leads to receptor dimerization and activation by autophosphorylation at Tyr-990 on the kinase activation loop. Tyrosine-protein kinase that acts as a cell-surface receptor for ANGPT1, ANGPT2 and ANGPT4 and regulates angiogenesis, endothelial cell survival, proliferation, migration, adhesion and cell spreading, reorganization of the actin cytoskeleton, but also maintenance of vascular quiescence. Has anti-inflammatory effects by preventing the leakage of pro-inflammatory plasma proteins and leukocytes from blood vessels. Required for normal angiogenesis and heart development during embryogenesis. Required for postnatal hematopoiesis. After birth, activates or inhibits angiogenesis, depending on the context. Inhibits angiogenesis and promotes vascular stability in quiescent vessels, where endothelial cells have tight contacts. In quiescent vessels, ANGPT1 oligomers recruit TEK to cell-cell contacts, forming complexes with TEK molecules from adjoining cells, and this leads to preferential activation of phosphatidylinositol 3-kinase and the AKT1 signaling cascades. In migrating endothelial cells that lack cell-cell adhesions, ANGT1 recruits TEK to contacts with the extracellular matrix, leading to the formation of focal adhesion complexes, activation of PTK2/FAK and of the downstream kinases MAPK1/ERK2 and MAPK3/ERK1, and ultimately to the stimulation of sprouting angiogenesis. ANGPT1 signaling triggers receptor dimerization and autophosphorylation at specific tyrosine residues that then serve as binding sites for scaffold proteins and effectors. Signaling is modulated by ANGPT2 that has lower affinity for TEK, can promote TEK autophosphorylation in the absence of ANGPT1, but inhibits ANGPT1-mediated signaling by competing for the same binding site. Signaling is also modulated by formation of heterodimers with TIE1, and by proteolytic processing that gives rise to a soluble TEK extracellular domain. The soluble extracellular domain modulates signaling by functioning as decoy receptor for angiopoietins. TEK phosphorylates DOK2, GRB7, GRB14, PIK3R1, SHC1 and TIE1. The chain is Angiopoietin-1 receptor (Tek) from Mus musculus (Mouse).